Consider the following 260-residue polypeptide: tRNA1(Val) (adenine(37)-N6)-methyltransferase (260 aa).

Belongs to the methyltransferase superfamily. tRNA (adenine-N(6)-)-methyltransferase family.

The protein resides in the cytoplasm. It catalyses the reaction adenosine(37) in tRNA1(Val) + S-adenosyl-L-methionine = N(6)-methyladenosine(37) in tRNA1(Val) + S-adenosyl-L-homocysteine + H(+). In terms of biological role, specifically methylates the adenine in position 37 of tRNA(1)(Val) (anticodon cmo5UAC). The protein is tRNA1(Val) (adenine(37)-N6)-methyltransferase of Serratia proteamaculans (strain 568).